A 455-amino-acid chain; its full sequence is Rhodopsin (455 aa).

Topologically, residues 1–34 (MVESTTLVNQTWWYNPTVDIHPHWAKFDPIPDAV) are extracellular. An N-linked (GlcNAc...) asparagine glycan is attached at Asn9. Residues 35–59 (YYSVGIFIGVVGIIGILGNGVVIYL) form a helical membrane-spanning segment. The Cytoplasmic portion of the chain corresponds to 60–71 (FSKTKSLQTPAN). Residues 72–98 (MFIINLAMSDLSFSAINGFPLKTISAF) traverse the membrane as a helical segment. The Extracellular portion of the chain corresponds to 99–110 (MKKWIFGKVACQ). Cys109 and Cys187 are joined by a disulfide. A helical transmembrane segment spans residues 111–132 (LYGLLGGIFGFMSINTMAMISI). Positions 133-135 (DRY) match the 'Ionic lock' involved in activated form stabilization motif. Residues 133 to 152 (DRYNVIGRPMAASKKMSHRR) are Cytoplasmic-facing. Residues 153–173 (AFLMIIFVWMWSIVWSVGPVF) form a helical membrane-spanning segment. Residues 174 to 200 (NWGAYVPEGILTSCSFDYLSTDPSTRS) are Extracellular-facing. Residues 201 to 225 (FILCMYFCGFMLPIIIIAFCYFNIV) form a helical membrane-spanning segment. Residues 226 to 262 (MSVSNHEKEMAAMAKRLNAKELRKAQAGASAEMKLAK) are Cytoplasmic-facing. Residues 263 to 284 (ISMVIITQFMLSWSPYAIIALL) form a helical membrane-spanning segment. The Extracellular portion of the chain corresponds to 285 to 294 (AQFGPAEWVT). Residues 295 to 316 (PYAAELPVLFAKASAIHNPIVY) form a helical membrane-spanning segment. The residue at position 306 (Lys306) is an N6-(retinylidene)lysine. Residues 317-455 (SVSHPKFREA…QGVDNQAYQA (139 aa)) are Cytoplasmic-facing. S-palmitoyl cysteine attachment occurs at residues Cys337 and Cys338. Over residues 378–387 (QKMQAQQAAY) the composition is skewed to low complexity. The tract at residues 378 to 455 (QKMQAQQAAY…QGVDNQAYQA (78 aa)) is disordered. Over residues 388–433 (QPPPPPQGYPPQGYPPQGAYPPPQGYPPQGYPPQGYPPQGYPPQGA) the composition is skewed to pro residues. Tandem repeats lie at residues 395–399 (GYPPQ), 400–404 (GYPPQ), 412–416 (GYPPQ), 417–421 (GYPPQ), 422–426 (GYPPQ), and 427–431 (GYPPQ). Positions 395–431 (GYPPQGYPPQGAYPPPQGYPPQGYPPQGYPPQGYPPQ) are 6 X 5 AA repeats of G-Y-P-P-Q.

The protein belongs to the G-protein coupled receptor 1 family. Opsin subfamily. In terms of processing, contains one covalently linked retinal chromophore. Upon light absorption, the covalently bound 11-cis-retinal is converted to all-trans-retinal. After hydrolysis of the Schiff base and release of the covalently bound all-trans-retinal, active rhodopsin is regenerated by binding of a fresh molecule of 11-cis-retinal.

The protein localises to the cell projection. The protein resides in the rhabdomere membrane. Photoreceptor required for image-forming vision at low light intensity. Light-induced isomerization of 11-cis to all-trans retinal triggers a conformational change that activates signaling via G-proteins. Signaling mediates the activation of phospholipase C. Subsequent receptor phosphorylation mediates displacement of the bound G-protein alpha subunit by arrestin and terminates signaling. The polypeptide is Rhodopsin (RHO) (Enteroctopus dofleini (North Pacific giant octopus)).